A 318-amino-acid polypeptide reads, in one-letter code: Protein RecA (318 aa).

53 to 60 (GPESSGKT) serves as a coordination point for ATP.

Belongs to the RecA family.

The protein localises to the cytoplasm. Its function is as follows. Can catalyze the hydrolysis of ATP in the presence of single-stranded DNA, the ATP-dependent uptake of single-stranded DNA by duplex DNA, and the ATP-dependent hybridization of homologous single-stranded DNAs. It interacts with LexA causing its activation and leading to its autocatalytic cleavage. The chain is Protein RecA from Bacteroides fragilis (strain YCH46).